Consider the following 447-residue polypeptide: tRNA modification GTPase MnmE (447 aa).

3 residues coordinate (6S)-5-formyl-5,6,7,8-tetrahydrofolate: Arg-24, Glu-81, and Lys-120. In terms of domain architecture, TrmE-type G spans 216–371 (GLNVAIAGKP…LRKELSNISG (156 aa)). Asn-226 contributes to the K(+) binding site. Residues 226–231 (NAGKSS), 245–251 (TDIAGTT), and 270–273 (DTAG) contribute to the GTP site. Position 230 (Ser-230) interacts with Mg(2+). K(+)-binding residues include Thr-245, Ile-247, and Thr-250. Thr-251 contacts Mg(2+). Position 447 (Lys-447) interacts with (6S)-5-formyl-5,6,7,8-tetrahydrofolate.

This sequence belongs to the TRAFAC class TrmE-Era-EngA-EngB-Septin-like GTPase superfamily. TrmE GTPase family. Homodimer. Heterotetramer of two MnmE and two MnmG subunits. K(+) serves as cofactor.

The protein resides in the cytoplasm. In terms of biological role, exhibits a very high intrinsic GTPase hydrolysis rate. Involved in the addition of a carboxymethylaminomethyl (cmnm) group at the wobble position (U34) of certain tRNAs, forming tRNA-cmnm(5)s(2)U34. The protein is tRNA modification GTPase MnmE of Vesicomyosocius okutanii subsp. Calyptogena okutanii (strain HA).